The sequence spans 351 residues: Dihydroorotate dehydrogenase (quinone) (351 aa).

Residues 67–71 (AGFDK) and threonine 91 contribute to the FMN site. Lysine 71 is a binding site for substrate. Residue 116-120 (NAMGF) coordinates substrate. Asparagine 145 and asparagine 178 together coordinate FMN. Residue asparagine 178 participates in substrate binding. Serine 181 functions as the Nucleophile in the catalytic mechanism. Substrate is bound at residue asparagine 183. FMN is bound by residues lysine 214 and threonine 242. Residue 243–244 (NT) coordinates substrate. FMN-binding positions include glycine 262, glycine 291, and 312 to 313 (YS).

This sequence belongs to the dihydroorotate dehydrogenase family. Type 2 subfamily. As to quaternary structure, monomer. The cofactor is FMN.

The protein resides in the cell membrane. The catalysed reaction is (S)-dihydroorotate + a quinone = orotate + a quinol. It participates in pyrimidine metabolism; UMP biosynthesis via de novo pathway; orotate from (S)-dihydroorotate (quinone route): step 1/1. In terms of biological role, catalyzes the conversion of dihydroorotate to orotate with quinone as electron acceptor. The polypeptide is Dihydroorotate dehydrogenase (quinone) (Helicobacter pylori (strain P12)).